The primary structure comprises 355 residues: Glutamyl aminopeptidase (355 aa).

His65 and Asp181 together coordinate a divalent metal cation. The Proton acceptor role is filled by Glu213. The a divalent metal cation site is built by Glu214, Asp236, and His319.

The protein belongs to the peptidase M42 family. A divalent metal cation is required as a cofactor.

It catalyses the reaction Release of N-terminal glutamate (and to a lesser extent aspartate) from a peptide.. The polypeptide is Glutamyl aminopeptidase (pepA) (Lactococcus lactis subsp. cremoris (strain MG1363)).